Reading from the N-terminus, the 557-residue chain is Potassium-transporting ATPase potassium-binding subunit (557 aa).

12 consecutive transmembrane segments (helical) span residues 5–25, 63–83, 132–152, 170–190, 253–273, 283–303, 329–349, 356–376, 379–399, 416–436, 484–504, and 526–546; these read GFLL…PLGS, LCAI…MLLG, GLTV…FALI, LLRI…LFFI, FVQM…FGEV, LLWA…WAEV, VLVS…AVIA, ALGG…FGGV, GLYG…LMIG, LTAL…ALAM, LLAF…MAIA, and LFVG…FIPA.

This sequence belongs to the KdpA family. As to quaternary structure, the system is composed of three essential subunits: KdpA, KdpB and KdpC.

It localises to the cell inner membrane. Part of the high-affinity ATP-driven potassium transport (or Kdp) system, which catalyzes the hydrolysis of ATP coupled with the electrogenic transport of potassium into the cytoplasm. This subunit binds the periplasmic potassium ions and delivers the ions to the membrane domain of KdpB through an intramembrane tunnel. The protein is Potassium-transporting ATPase potassium-binding subunit of Escherichia coli O17:K52:H18 (strain UMN026 / ExPEC).